The following is a 290-amino-acid chain: uncharacterized protein (290 aa).

Disordered stretches follow at residues 105-156 and 259-290; these read LKHK…KLTV and EGAQ…KSKK. The segment covering 114 to 130 has biased composition (polar residues); sequence KATQQARKRNFISSKSK. 2 stretches are compositionally biased toward basic and acidic residues: residues 143-156 and 261-280; these read RESK…KLTV and AQRD…EPVL.

This is an uncharacterized protein from Homo sapiens (Human).